Reading from the N-terminus, the 265-residue chain is Beta-lactamase SHV-4 (265 aa).

Residue Ser45 is the Acyl-ester intermediate of the active site. A disulfide bridge links Cys52 with Cys98. The active-site Proton acceptor is the Glu143. Residue 209–211 (KTG) coordinates substrate.

Belongs to the class-A beta-lactamase family.

It carries out the reaction a beta-lactam + H2O = a substituted beta-amino acid. Functionally, SHV enzymes hydrolyze broad spectrum cephalosporins notably cefotaxime and ceftazidime. SHV-4 causes particularly high levels of resistance to aztreonam and ceftazidime. This Klebsiella pneumoniae protein is Beta-lactamase SHV-4 (bla).